The primary structure comprises 43 residues: Protein PsbN (43 aa).

Residues 7-27 (ITIFLSCFLVGVTGYALYTAF) form a helical membrane-spanning segment.

This sequence belongs to the PsbN family.

The protein localises to the plastid. Its subcellular location is the chloroplast thylakoid membrane. In terms of biological role, may play a role in photosystem I and II biogenesis. The polypeptide is Protein PsbN (Klebsormidium bilatum (Filamentous green alga)).